Here is a 219-residue protein sequence, read N- to C-terminus: Ribosome maturation factor RimP (219 aa).

Residues 195–219 (EGRIPGDDLGAEPEDAASTETQEKK) are disordered.

Belongs to the RimP family.

The protein resides in the cytoplasm. In terms of biological role, required for maturation of 30S ribosomal subunits. The chain is Ribosome maturation factor RimP from Brucella melitensis biotype 2 (strain ATCC 23457).